Here is a 356-residue protein sequence, read N- to C-terminus: sn-glycerol-3-phosphate import ATP-binding protein UgpC (356 aa).

The ABC transporter domain occupies 4–235; the sequence is LKLQAVTKSW…PASLFVASFI (232 aa). 37–44 serves as a coordination point for ATP; sequence GPSGCGKS.

This sequence belongs to the ABC transporter superfamily. sn-glycerol-3-phosphate importer (TC 3.A.1.1.3) family. In terms of assembly, the complex is composed of two ATP-binding proteins (UgpC), two transmembrane proteins (UgpA and UgpE) and a solute-binding protein (UgpB).

The protein resides in the cell inner membrane. The enzyme catalyses sn-glycerol 3-phosphate(out) + ATP + H2O = sn-glycerol 3-phosphate(in) + ADP + phosphate + H(+). Its function is as follows. Part of the ABC transporter complex UgpBAEC involved in sn-glycerol-3-phosphate (G3P) import. Responsible for energy coupling to the transport system. In Escherichia coli O6:H1 (strain CFT073 / ATCC 700928 / UPEC), this protein is sn-glycerol-3-phosphate import ATP-binding protein UgpC.